We begin with the raw amino-acid sequence, 192 residues long: MPKYYCEYCDIYLTHSSPVGRRQHNQGRKHISAKIEYFQNLLREEGITPQNFLGFLGSQAYNNILSNPMMNNFMHGNYNGYMKYNPMRNYHHSNRNPNYQHSVGMHNNKYSRAGYVPPGANKYPNNNFHNNKRISNTPKPYNNYTNKPITNSPYKNDKQDYRNNNENSNNFSNYQMNKDNSNFVNKNSEQPN.

A Matrin-type zinc finger spans residues 4 to 36 (YYCEYCDIYLTHSSPVGRRQHNQGRKHISAKIE). A disordered region spans residues 118-192 (PGANKYPNNN…FVNKNSEQPN (75 aa)). The segment covering 133-154 (RISNTPKPYNNYTNKPITNSPY) has biased composition (polar residues). Residues 164 to 173 (NNENSNNFSN) are compositionally biased toward low complexity. Residues 174 to 192 (YQMNKDNSNFVNKNSEQPN) are compositionally biased toward polar residues.

The protein belongs to the U1 small nuclear ribonucleoprotein C family. In terms of assembly, U1 snRNP is composed of the 7 core Sm proteins B/B', D1, D2, D3, E, F and G that assemble in a heptameric protein ring on the Sm site of the small nuclear RNA to form the core snRNP, and at least 3 U1 snRNP-specific proteins U1-70K, U1-A and U1-C. U1-C interacts with U1 snRNA and the 5' splice-site region of the pre-mRNA.

The protein localises to the nucleus. In terms of biological role, component of the spliceosomal U1 snRNP, which is essential for recognition of the pre-mRNA 5' splice-site and the subsequent assembly of the spliceosome. U1-C is directly involved in initial 5' splice-site recognition for both constitutive and regulated alternative splicing. The interaction with the 5' splice-site seems to precede base-pairing between the pre-mRNA and the U1 snRNA. Stimulates commitment or early (E) complex formation by stabilizing the base pairing of the 5' end of the U1 snRNA and the 5' splice-site region. This Plasmodium chabaudi chabaudi protein is U1 small nuclear ribonucleoprotein C.